The following is a 572-amino-acid chain: Arginine--tRNA ligase (572 aa).

Positions 122-132 (PNLAKEMHVGH) match the 'HIGH' region motif.

The protein belongs to the class-I aminoacyl-tRNA synthetase family. In terms of assembly, monomer.

It is found in the cytoplasm. The enzyme catalyses tRNA(Arg) + L-arginine + ATP = L-arginyl-tRNA(Arg) + AMP + diphosphate. In Neisseria gonorrhoeae (strain ATCC 700825 / FA 1090), this protein is Arginine--tRNA ligase.